Consider the following 234-residue polypeptide: Probable chemoreceptor glutamine deamidase CheD 1 (234 aa).

Residues 183–234 (AREAAGPRGERAARARPRVELFGTPAPKAQATPRIELFGTRATQPATRKQEA) form a disordered region. The span at 190-201 (RGERAARARPRV) shows a compositional bias: basic and acidic residues. The span at 223 to 234 (RATQPATRKQEA) shows a compositional bias: polar residues.

This sequence belongs to the CheD family.

It carries out the reaction L-glutaminyl-[protein] + H2O = L-glutamyl-[protein] + NH4(+). Probably deamidates glutamine residues to glutamate on methyl-accepting chemotaxis receptors (MCPs), playing an important role in chemotaxis. This chain is Probable chemoreceptor glutamine deamidase CheD 1, found in Burkholderia thailandensis (strain ATCC 700388 / DSM 13276 / CCUG 48851 / CIP 106301 / E264).